Consider the following 35-residue polypeptide: Kappa-stichotoxin-She3a (35 aa).

Residues 3–35 form the ShKT domain; it reads CIDTIPKSRCTAFQCKHSMKYRLSFCRKTCGTC. 3 disulfides stabilise this stretch: Cys3-Cys35, Cys12-Cys28, and Cys17-Cys32.

The protein belongs to the sea anemone type 1 potassium channel toxin family. Type 1a subfamily.

The protein localises to the secreted. The protein resides in the nematocyst. Its function is as follows. Peptide with both antimicrobial and neurotoxin activities. Inhibits voltage-dependent potassium channels. Potently blocks Kv1.1/KCNA1 (IC(50)=6.7-87 pM) and Kv1.3/KCNA3 (IC(50)=10-250 pM). Less potently blocks Kv1.4/KCNA4 (IC(50)=0.31 nM), and Kv1.6/KCNA6 (IC(50)=0.16 nM). Shows moderate activity on Kv1.2/KCNA2 (IC(50)=9 nM), Kv1.7/KCNA7 (IC(50)=11.5 nM), and KCa3.1/KCNN4 (Kd=0.03-30 nM). Blocks Kv channels by binding to a shallow vestibule at the outer entrance to the ion conduction pathway and occluding the entrance to the pore. Shows antibacterial activity against all tested bacteria (the Gram-positive bacteria B.subtilis and S.aureus, and the Gram-negative bacteria S.typhimurium and P.aeruginosa). In Stichodactyla helianthus (Sun anemone), this protein is Kappa-stichotoxin-She3a.